A 238-amino-acid chain; its full sequence is Chromosome partition protein MukE (238 aa).

A disordered region spans residues E206–A238. Residues N218 to A238 are compositionally biased toward basic and acidic residues.

The protein belongs to the MukE family. In terms of assembly, interacts, and probably forms a ternary complex, with MukF and MukB. The complex formation is stimulated by calcium or magnesium.

Its subcellular location is the cytoplasm. It localises to the nucleoid. Involved in chromosome condensation, segregation and cell cycle progression. May participate in facilitating chromosome segregation by condensation DNA from both sides of a centrally located replisome during cell division. Probably acts via its interaction with MukB and MukF. The polypeptide is Chromosome partition protein MukE (Aliivibrio salmonicida (strain LFI1238) (Vibrio salmonicida (strain LFI1238))).